We begin with the raw amino-acid sequence, 353 residues long: Phospho-N-acetylmuramoyl-pentapeptide-transferase (353 aa).

The next 10 helical transmembrane spans lie at 22 to 42 (FAFFIALCLSLFLMPKFITWA), 65 to 85 (TPTMGGLIFISSAVIASLFCI), 88 to 108 (DNIFAISALLCLILFCLIGLI), 129 to 149 (LLAQIIAGLICILPLYFSSEL), 161 to 181 (PLFDMEIFAIVFWILVLISSS), 192 to 212 (GLATVPSIFSLSTLGIFLYLS), 228 to 248 (GLGEVVIICAALIGALMGFLW), 256 to 276 (VFMGDSGSLALGGFIGFLAII), 281 to 301 (ILLLLIGFVFVLETVSVILQV), and 330 to 350 (KIIVRFWMIALLSNLLALASI).

It belongs to the glycosyltransferase 4 family. MraY subfamily. Requires Mg(2+) as cofactor.

It localises to the cell inner membrane. It catalyses the reaction UDP-N-acetyl-alpha-D-muramoyl-L-alanyl-gamma-D-glutamyl-meso-2,6-diaminopimeloyl-D-alanyl-D-alanine + di-trans,octa-cis-undecaprenyl phosphate = di-trans,octa-cis-undecaprenyl diphospho-N-acetyl-alpha-D-muramoyl-L-alanyl-D-glutamyl-meso-2,6-diaminopimeloyl-D-alanyl-D-alanine + UMP. Its pathway is cell wall biogenesis; peptidoglycan biosynthesis. Catalyzes the initial step of the lipid cycle reactions in the biosynthesis of the cell wall peptidoglycan: transfers peptidoglycan precursor phospho-MurNAc-pentapeptide from UDP-MurNAc-pentapeptide onto the lipid carrier undecaprenyl phosphate, yielding undecaprenyl-pyrophosphoryl-MurNAc-pentapeptide, known as lipid I. This chain is Phospho-N-acetylmuramoyl-pentapeptide-transferase, found in Campylobacter jejuni subsp. jejuni serotype O:6 (strain 81116 / NCTC 11828).